We begin with the raw amino-acid sequence, 789 residues long: Disintegrin and metalloproteinase domain-containing protein 7 (789 aa).

Residues Met-1 to Glu-25 form the signal peptide. A propeptide spanning residues Gly-26–Thr-176 is cleaved from the precursor. N-linked (GlcNAc...) asparagine glycans are attached at residues Asn-84, Asn-167, and Asn-174. Topologically, residues Lys-177–Val-668 are extracellular. The region spanning Lys-199–Pro-393 is the Peptidase M12B domain. Cystine bridges form between Cys-310-Cys-388, Cys-350-Cys-372, Cys-352-Cys-357, and Cys-459-Cys-479. In terms of domain architecture, Disintegrin spans Tyr-401 to Asn-487. Asn-583, Asn-628, and Asn-664 each carry an N-linked (GlcNAc...) asparagine glycan. Residues Ser-669–Ile-689 traverse the membrane as a helical segment. At Arg-690–Gly-789 the chain is on the cytoplasmic side. Residues Asp-762–Gln-771 show a composition bias toward basic and acidic residues. The segment at Asp-762 to Gly-789 is disordered. Residues Asn-772–Gly-789 are compositionally biased toward polar residues.

As to quaternary structure, interacts with ITM2B in sperm; the interaction increases following capacitation. Interacts with HSPA5 and CANX. As to expression, expressed specifically in the caput region of the epididymis (at protein level).

The protein localises to the membrane. In terms of biological role, required for normal male fertility via maintenance of epithelial cell morphology in the caput epididymis and subsequently correct epididymis lumen structure required for sperm development. Plays a role in sperm motility, flagella morphology and tyrosine phosphorylation during sperm capacitance. Plays a role in normal expression levels of HSPA5, ITM2B and ADAM2 in sperm both prior to and post-capacitation. This is a non catalytic metalloprotease-like protein. In Rattus norvegicus (Rat), this protein is Disintegrin and metalloproteinase domain-containing protein 7.